The following is a 418-amino-acid chain: L-rhamnose isomerase (418 aa).

Mn(2+) contacts are provided by His-262, Asp-294, and Asp-296.

It belongs to the rhamnose isomerase family. As to quaternary structure, homotetramer. It depends on Mn(2+) as a cofactor.

It is found in the cytoplasm. It catalyses the reaction L-rhamnopyranose = L-rhamnulose. The protein operates within carbohydrate degradation; L-rhamnose degradation; glycerone phosphate from L-rhamnose: step 1/3. Catalyzes the interconversion of L-rhamnose and L-rhamnulose. The polypeptide is L-rhamnose isomerase (Yersinia pseudotuberculosis serotype IB (strain PB1/+)).